A 1434-amino-acid chain; its full sequence is MKDLLKFLKAQTKTEEFDSIKIGLASPDMIRSWSFGEVKKPETINYRTFKPERDGLFCARIFGPVKDYECLCGKYKRLKHRGVICEKCGVEVTQTKVRRERMGHIELASPTAHIWFLKSLPSRIGLLLDMTLRDIERVLYFESYVVIEPGMTNLERSQMLSEEQYLDALEEWGDEFDAKMGAEAILALLRAIDLEGEVRTMREELDQTNSETKRKKTTKRLKLMEAFLQSGNKPEWMIMTVLPVLPPDLRPLVPLDGGRFATSDLNDLYRRVINRNNRLKRLLDLAAPDIIVRNEKRMLQESVDALLDNGRRGRAITGSNKRPLKSLADMIKGKQGRFRQNLLGKRVDYSGRSVITVGPTLRLHQCGLPKKMALELFKPFIYGKLESRGLATTIKAAKKMVEREEAVVWDILDEVIREHPVLLNRAPTLHRLGIQAFEPTLIEGKAIQLHPLVCAAYNADFDGDQMAVHVPLTLEAQLEARALMMSTNNILSPASGEPIIVPSQDVVLGLYYMTRARINAKGEGMVLSGPKEAEKVYRAGLADLHARVKVRITEYLRQEDGSLRAHTEMKNTTVGRAILSLILPKGMEYALIDEPKVLTAAEQADLDANPQNWIKSVSNKALGKKLISRLLNTCYRKQGLKDTVIFADQLMYTGFHYAALSGASVGIDDMVIPDAKKDIIAAAEAEVAEIQDQFLSGLVTAGERYNKVIDIWASANERVSKAMMENLSKERNVNSLGEEEEQASFNSIFMMADSGARGSAAQIRQLAGMRGLMAKPDGSIIETPIVANFREGLNVLQYFISTHGARKGLADTALKTANSGYLTRRLVDVAQDMVITEDDCGTTEGLWMTPLIEGGDVVEPLRERVLGRVVADDVIKPGTEDEVLVARNTLLDEQLCDLLERNSVDRVKVRSAITCETDFGNCAHCYGRDLARGHLVNKGEAVGVIAAQSIGEPGTQLTMRTFHIGGAASRAAAESSIQVKNTGSIKLQNAKFVHNSDDKLVITSRSTELTIMDEMGRTKESHKLPYGSVLEVKDGQAVNAGETVANWDPHTHPIITEVAGRLHFEHMIDGVTITRQTDELTGLSSIVVLDVNERPSAGKEMRPTVKLVDLNGKDVMIPGTDVAAQYFLPGKAIVNLEDGANVGVGDAVARIPQESGGTKDITGGLPRVADLFEARQPKEPAILAEISGTISFGKETKGKRRLVITPTDGGDVYEEMIPKWRNLNVFEGEKVEKGEVLADGPESAHDILRLRGISPVANYIANEVQDVYRLQGVKINDKHIEVIVRQMLRKCEILSAGDTDLIEGEQVEVARVKIANRKLVAEGKTPATFRHILMGITKASLSTESFISAASFQETTRVLTEAAVGGKRDELRGLKENVIVGRLIPAGTGFAYHHGRINQRAAAARAVGVPQVTADEAQQNLADLLNAAGSFDEE.

The Zn(2+) site is built by cysteine 70, cysteine 72, cysteine 85, and cysteine 88. Mg(2+) is bound by residues aspartate 460, aspartate 462, and aspartate 464. Cysteine 840, cysteine 915, cysteine 922, and cysteine 925 together coordinate Zn(2+).

This sequence belongs to the RNA polymerase beta' chain family. In terms of assembly, the RNAP catalytic core consists of 2 alpha, 1 beta, 1 beta' and 1 omega subunit. When a sigma factor is associated with the core the holoenzyme is formed, which can initiate transcription. It depends on Mg(2+) as a cofactor. The cofactor is Zn(2+).

The catalysed reaction is RNA(n) + a ribonucleoside 5'-triphosphate = RNA(n+1) + diphosphate. Its function is as follows. DNA-dependent RNA polymerase catalyzes the transcription of DNA into RNA using the four ribonucleoside triphosphates as substrates. The polypeptide is DNA-directed RNA polymerase subunit beta' (Aeromonas hydrophila subsp. hydrophila (strain ATCC 7966 / DSM 30187 / BCRC 13018 / CCUG 14551 / JCM 1027 / KCTC 2358 / NCIMB 9240 / NCTC 8049)).